A 284-amino-acid chain; its full sequence is Protoheme IX farnesyltransferase (284 aa).

The next 8 helical transmembrane spans lie at 13 to 33 (IIIG…FPFF), 35 to 55 (VFLF…SCIF), 87 to 107 (IFAS…VNIL), 108 to 128 (SMFL…FFLK), 133 to 153 (YSTF…HTAI), 162 to 182 (FLLF…IAIL), 224 to 244 (FLGY…FYWL), and 264 to 284 (FYYS…DFIF).

The protein belongs to the UbiA prenyltransferase family. Protoheme IX farnesyltransferase subfamily.

It is found in the cell membrane. The catalysed reaction is heme b + (2E,6E)-farnesyl diphosphate + H2O = Fe(II)-heme o + diphosphate. It functions in the pathway porphyrin-containing compound metabolism; heme O biosynthesis; heme O from protoheme: step 1/1. Functionally, converts heme B (protoheme IX) to heme O by substitution of the vinyl group on carbon 2 of heme B porphyrin ring with a hydroxyethyl farnesyl side group. In Buchnera aphidicola subsp. Schizaphis graminum (strain Sg), this protein is Protoheme IX farnesyltransferase.